Reading from the N-terminus, the 216-residue chain is Small ribosomal subunit protein uS5 (216 aa).

The region spanning 51–114 (LEEEVIDVNL…DDAKFNIIKV (64 aa)) is the S5 DRBM domain.

The protein belongs to the universal ribosomal protein uS5 family. In terms of assembly, part of the 30S ribosomal subunit. Contacts protein S4.

Functionally, with S4 and S12 plays an important role in translational accuracy. In Methanothermobacter thermautotrophicus (strain ATCC 29096 / DSM 1053 / JCM 10044 / NBRC 100330 / Delta H) (Methanobacterium thermoautotrophicum), this protein is Small ribosomal subunit protein uS5.